The primary structure comprises 943 residues: MSQDYKTTLHLPATDFPMRGDLPKREPAILERWERDDFYAQLRAHAKGRPLFLLHDGPPYANGQIHLGHAVNKILKDIIIKSKHLDGFDAPYIPGWDCHGLPIEIAIEKKYGKVGVTLDAVQFRQKCREYAAEQIQLQRRDFKRLGIIGDWDAPYKTLDFRFEADEIRALAKIVDKGHLIRGTKPVHWCFDCGSALAEAEIEYTDKISPMVDVAYPALDPSALAAVFNATLPPDVQLAVPIWTTTPWTLPASLAICVGPTLDYVLVEGPTHSGQRRWLILAEALAAKALARYGIAELLIHGSAKGAAMEQHIFAHPFYPDRTIPLLLGNHVSAEDGTGAVHTAPGHGQEDHQVFQQYGLLNRYSAAELNPVDARGVYLSTTPPLGELTLAGLHIWKANPLIVDALRLRGVLLAAAEMHHSYPHCWRHKTPIVFRATPQWFISMEQAALRSAALKAITHVTWYPQWGQARILSMIENRPDWTISRQRTWGVPIPLFVHRHSGAPHPHSAALMRQIADRVQQQGVDIWYSLDQTELLGTEADQYEKITDILDVWFDSGITHEAVLLERGLPKPADLYLEGADQHRGWFQSSLLTGVAMDNAAPYKQCLTHGFTVDQHGRKMSKSLGNGIEPQDIIKTLGADILRLWIASTDYSNEMSLSQEILKRTTDAYRRIRNTARFLLGNLHGFDPTLHLVPLSDMIALDRWIVHRAFELQQTIKAAYTRYDFAEIVQTILNFCSVDLGSLYLDVTKDRLYTMREDAPGRRSAQTAMYHLTAAFVRWIAPILSFTADELWSYLPGDHADNVLFTTWYDGLAPLPPNAPLTAADFDKLLTLRDHVTKVLEPMRANGVIGAALEAEITVAAAADTAARWQPLTEELRFLFITGDVTVTPANTDGFFVSAQATTKAKCARCWHYRADIGAHPTHPELCGRCITNVDGPGEQRHWF.

The 'HIGH' region motif lies at 59-69; sequence PYANGQIHLGH. Residue glutamate 577 coordinates L-isoleucyl-5'-AMP. The 'KMSKS' region motif lies at 618–622; that stretch reads KMSKS. Lysine 621 serves as a coordination point for ATP. 4 residues coordinate Zn(2+): cysteine 906, cysteine 909, cysteine 926, and cysteine 929.

This sequence belongs to the class-I aminoacyl-tRNA synthetase family. IleS type 1 subfamily. As to quaternary structure, monomer. Requires Zn(2+) as cofactor.

It localises to the cytoplasm. The catalysed reaction is tRNA(Ile) + L-isoleucine + ATP = L-isoleucyl-tRNA(Ile) + AMP + diphosphate. Catalyzes the attachment of isoleucine to tRNA(Ile). As IleRS can inadvertently accommodate and process structurally similar amino acids such as valine, to avoid such errors it has two additional distinct tRNA(Ile)-dependent editing activities. One activity is designated as 'pretransfer' editing and involves the hydrolysis of activated Val-AMP. The other activity is designated 'posttransfer' editing and involves deacylation of mischarged Val-tRNA(Ile). The chain is Isoleucine--tRNA ligase from Xylella fastidiosa (strain M23).